Reading from the N-terminus, the 180-residue chain is MASSVMSSAAVATRGNGAQASMVAPFTGLKSTASFPVSRKQNLDITSIASNGGRVSCMQVWPPINMKKYETLSYLPDLSDEQLLSEIEYLLKNGWVPCLEFETEHGFVYRENHKSPGYYDGRYWTMWKLPMFGCTDATQVLAEVQEAKKAYPQAWVRIIGFDNVRQVQCISFIAYKPEGY.

The transit peptide at Met-1–Ser-56 directs the protein to the chloroplast.

Belongs to the RuBisCO small chain family. In terms of assembly, heterohexadecamer of 8 large and 8 small subunits. As to quaternary structure, (Microbial infection) Binds to tobamovirus movement protein; this interaction seems required for viral systemic movement.

It localises to the plastid. Its subcellular location is the chloroplast. The protein localises to the cell junction. The protein resides in the plasmodesma. In terms of biological role, ruBisCO catalyzes two reactions: the carboxylation of D-ribulose 1,5-bisphosphate, the primary event in carbon dioxide fixation, as well as the oxidative fragmentation of the pentose substrate. Both reactions occur simultaneously and in competition at the same active site. Although the small subunit is not catalytic it is essential for maximal activity. Involved in antiviral defenses. The sequence is that of Ribulose bisphosphate carboxylase small subunit, chloroplastic 3 from Solanum lycopersicum (Tomato).